The sequence spans 590 residues: Urease subunit alpha (590 aa).

The 457-residue stretch at 134 to 590 folds into the Urease domain; it reads GGIDSHIHFI…LPLAQRYFLF (457 aa). Residues histidine 139, histidine 141, and lysine 222 each coordinate Ni(2+). Lysine 222 bears the N6-carboxylysine mark. Histidine 224 lines the substrate pocket. Residues histidine 251 and histidine 277 each coordinate Ni(2+). The Proton donor role is filled by histidine 325. Residue aspartate 365 coordinates Ni(2+). The interval 388–416 is disordered; the sequence is QQRGWLSPPAAGQGAGLSSAAGQGVDHDT. Positions 393 to 411 are enriched in low complexity; that stretch reads LSPPAAGQGAGLSSAAGQG.

The protein belongs to the metallo-dependent hydrolases superfamily. Urease alpha subunit family. Heterotrimer of UreA (gamma), UreB (beta) and UreC (alpha) subunits. Three heterotrimers associate to form the active enzyme. Ni cation is required as a cofactor. Post-translationally, carboxylation allows a single lysine to coordinate two nickel ions.

Its subcellular location is the cytoplasm. The catalysed reaction is urea + 2 H2O + H(+) = hydrogencarbonate + 2 NH4(+). Its pathway is nitrogen metabolism; urea degradation; CO(2) and NH(3) from urea (urease route): step 1/1. The chain is Urease subunit alpha from Verminephrobacter eiseniae (strain EF01-2).